The chain runs to 215 residues: MKFILLGAPGAGKGTQAQFLTKEFNIPQISTGDMLRAAIKAQTPMGKMAKEFMDAGKLVTDEIIIGLVKDRIAEPDCANGFLLDGFPRTVPQADALKAAGVEIDAVIEIDVPDSEIVNRMAGRRVHPASGRTYHITYNPPKVDDKDNETGDDLIQREDDKAEVVLDRLKVYHEQTAPLIGYYKAEAEKNDQLKYIQVDGTQPIDTVEKSILSALK.

10–15 is an ATP binding site; the sequence is GAGKGT. The NMP stretch occupies residues 30-59; the sequence is STGDMLRAAIKAQTPMGKMAKEFMDAGKLV. AMP contacts are provided by residues Thr-31, Arg-36, 57–59, 85–88, and Gln-92; these read KLV and GFPR. The LID stretch occupies residues 122-159; that stretch reads GRRVHPASGRTYHITYNPPKVDDKDNETGDDLIQREDD. ATP is bound by residues Arg-123 and 132 to 133; that span reads TY. AMP contacts are provided by Arg-156 and Arg-167. Gln-201 is a binding site for ATP.

This sequence belongs to the adenylate kinase family. In terms of assembly, monomer.

The protein localises to the cytoplasm. The enzyme catalyses AMP + ATP = 2 ADP. The protein operates within purine metabolism; AMP biosynthesis via salvage pathway; AMP from ADP: step 1/1. Functionally, catalyzes the reversible transfer of the terminal phosphate group between ATP and AMP. Plays an important role in cellular energy homeostasis and in adenine nucleotide metabolism. The protein is Adenylate kinase of Hydrogenovibrio crunogenus (strain DSM 25203 / XCL-2) (Thiomicrospira crunogena).